The primary structure comprises 710 residues: uncharacterized protein (710 aa).

The disordered stretch occupies residues 1 to 40; the sequence is MSESDGAFKSPSLPPSHHAPAPMSPEKIRAPAEQMDGPVE. Residues 15–25 show a composition bias toward low complexity; sequence PSHHAPAPMSP. The FHA domain maps to 108 to 165; sequence VVIGRIKPGCDLLMEHPSISRYHCILQYGNDKMSKTGKGWHIFELGSTHGSRMNKKRL. Coiled coils occupy residues 206-240, 409-440, and 471-502; these read TEMK…KEEE, ETDT…LSAG, and AKTK…KIAK. Residues 230-250 are disordered; the sequence is IDDEKREKEEEGCGWGMDYGE. 3 disordered regions span residues 535-560, 591-619, and 671-710; these read EIDQ…APTS, KNSL…AFGS, and EDYG…AGRY. Over residues 538–560 the composition is skewed to polar residues; that stretch reads QTPSQGPGPSTSATLPATVAPTS. Residues 613-661 are a coiled coil; it reads QKEAFGSKVQKRVAQWEEELEAEKEELAKKQKLEAEEEAKKKVQRVRRR.

This is an uncharacterized protein from Caenorhabditis elegans.